We begin with the raw amino-acid sequence, 192 residues long: ER protein translocation subcomplex subunit sec67 (192 aa).

As to quaternary structure, component of the heterotetrameric Sec62/63complex composed of sec62, sec63, sec66 and sec72. The Sec62/63 complex associates with the Sec61 complex to form the Sec complex.

The protein resides in the cytoplasm. It is found in the nucleus. In terms of biological role, acts as a non-essential component of the Sec62/63 complex which is involved in SRP-independent post-translational translocation across the endoplasmic reticulum (ER) and functions together with the Sec61 complex and bip1 in a channel-forming translocon complex. A cycle of assembly and disassembly of Sec62/63 complex from sec61 may govern the activity of the translocon. sec72 may be involved in signal peptide recognition for a defined subset of leader peptides, or may increase the efficiency of unusual or 'difficult' secretory precursors to the translocation pore, it may be that this protein binds charged leader peptides to the membrane until they engage the translocation apparatus. The protein is ER protein translocation subcomplex subunit sec67 (sec67) of Schizosaccharomyces pombe (strain 972 / ATCC 24843) (Fission yeast).